Reading from the N-terminus, the 82-residue chain is Acyl carrier protein (82 aa).

Positions 4 to 79 constitute a Carrier domain; sequence PEMESRLKKI…DALNYIEQKL (76 aa). Ser39 is subject to O-(pantetheine 4'-phosphoryl)serine.

It belongs to the acyl carrier protein (ACP) family. 4'-phosphopantetheine is transferred from CoA to a specific serine of apo-ACP by AcpS. This modification is essential for activity because fatty acids are bound in thioester linkage to the sulfhydryl of the prosthetic group.

It localises to the cytoplasm. It participates in lipid metabolism; fatty acid biosynthesis. In terms of biological role, carrier of the growing fatty acid chain in fatty acid biosynthesis. The sequence is that of Acyl carrier protein from Roseiflexus sp. (strain RS-1).